The chain runs to 413 residues: Multidrug resistance protein MdtA (413 aa).

An N-terminal signal peptide occupies residues 1–20 (MKGSNTFRWAIAIGVVVAAA). Disordered regions lie at residues 31–57 (SPTA…RDGP) and 391–413 (EPQT…GARA). The span at 397–413 (ADEKSPSRHEGQKGARA) shows a compositional bias: basic and acidic residues.

Belongs to the membrane fusion protein (MFP) (TC 8.A.1) family. Part of a tripartite efflux system composed of MdtA, MdtB and MdtC.

It is found in the cell inner membrane. This Salmonella paratyphi C (strain RKS4594) protein is Multidrug resistance protein MdtA.